A 498-amino-acid polypeptide reads, in one-letter code: UDP-N-acetylmuramoyl-L-alanyl-D-glutamate--2,6-diaminopimelate ligase (498 aa).

Residue serine 29 coordinates UDP-N-acetyl-alpha-D-muramoyl-L-alanyl-D-glutamate. An ATP-binding site is contributed by 120–126 (GTDGKTS). UDP-N-acetyl-alpha-D-muramoyl-L-alanyl-D-glutamate is bound by residues 162 to 163 (TT), serine 189, glutamine 195, and arginine 197. N6-carboxylysine is present on lysine 229. Residues arginine 392, 416 to 419 (DNPR), glycine 466, and glutamate 470 contribute to the meso-2,6-diaminopimelate site. The short motif at 416-419 (DNPR) is the Meso-diaminopimelate recognition motif element.

The protein belongs to the MurCDEF family. MurE subfamily. Mg(2+) is required as a cofactor. In terms of processing, carboxylation is probably crucial for Mg(2+) binding and, consequently, for the gamma-phosphate positioning of ATP.

It localises to the cytoplasm. It catalyses the reaction UDP-N-acetyl-alpha-D-muramoyl-L-alanyl-D-glutamate + meso-2,6-diaminopimelate + ATP = UDP-N-acetyl-alpha-D-muramoyl-L-alanyl-gamma-D-glutamyl-meso-2,6-diaminopimelate + ADP + phosphate + H(+). The protein operates within cell wall biogenesis; peptidoglycan biosynthesis. Functionally, catalyzes the addition of meso-diaminopimelic acid to the nucleotide precursor UDP-N-acetylmuramoyl-L-alanyl-D-glutamate (UMAG) in the biosynthesis of bacterial cell-wall peptidoglycan. This chain is UDP-N-acetylmuramoyl-L-alanyl-D-glutamate--2,6-diaminopimelate ligase, found in Alkalilimnicola ehrlichii (strain ATCC BAA-1101 / DSM 17681 / MLHE-1).